The following is a 317-amino-acid chain: Mitochondrial thiamine pyrophosphate carrier 1 (317 aa).

3 Solcar repeats span residues 12–110 (GTRR…TTQV), 120–206 (PPAL…LRPV), and 214–309 (PFGS…SLKL). Helical transmembrane passes span 17–35 (VVLS…VAPL), 91–107 (LMYV…YRTT), 126–146 (FVSG…LDLL), 181–198 (GCSA…LFFA), 220–240 (AAAG…LDLV), and 284–301 (GLTV…ITMW).

It belongs to the mitochondrial carrier (TC 2.A.29) family.

The protein localises to the mitochondrion inner membrane. Its function is as follows. Mitochondrial transporter that mediates uptake of thiamine pyrophosphate (ThPP) into mitochondria. The chain is Mitochondrial thiamine pyrophosphate carrier 1 (tpc1) from Neosartorya fischeri (strain ATCC 1020 / DSM 3700 / CBS 544.65 / FGSC A1164 / JCM 1740 / NRRL 181 / WB 181) (Aspergillus fischerianus).